We begin with the raw amino-acid sequence, 327 residues long: DNA repair protein XRCC4 (327 aa).

An interaction with IFFO1 region spans residues 1 to 211 (MERKVSRISL…QLEKNLKPER (211 aa)). Serine 53 carries the post-translational modification Phosphoserine. Coiled-coil stretches lie at residues 133 to 153 (IAEK…LLRD) and 183 to 213 (LNEK…ERET). Interaction with LIG4 regions lie at residues 179-210 (FILV…LKPE) and 179-211 (FILV…KPER). Serine 192 carries the phosphoserine modification. Lysine 208 is covalently cross-linked (Glycyl lysine isopeptide (Lys-Gly) (interchain with G-Cter in SUMO)). The residue at position 226 (tyrosine 226) is a Phosphotyrosine. At serine 229 the chain carries Phosphoserine. A Phosphothreonine modification is found at threonine 230. Phosphoserine is present on residues serine 249 and serine 253. The interval 255–327 (DVTDIAPSRK…RNSSPEDIFD (73 aa)) is disordered. Residues 263–268 (RKRRHH) carry the Nuclear localization signal motif. Lysine 289 is covalently cross-linked (Glycyl lysine isopeptide (Lys-Gly) (interchain with G-Cter in ubiquitin)). Phosphoserine occurs at positions 294, 295, 308, and 313. Over residues 308 to 327 (SAGNMSLETLRNSSPEDIFD) the composition is skewed to polar residues. Threonine 316 carries the post-translational modification Phosphothreonine. Phosphoserine occurs at positions 320 and 321.

Belongs to the XRCC4-XLF family. XRCC4 subfamily. In terms of assembly, homodimer and homotetramer in solution. Interacts with NHEJ1/XLF; the interaction is direct and is mediated via a head-to-head interaction between N-terminal head regions. Interacts with LIG4; the LIG4-XRCC4 subcomplex has a 1:2 stoichiometry and XRCC4 is required for LIG4 stability. Component of the core long-range non-homologous end joining (NHEJ) complex (also named DNA-PK complex) composed of PRKDC, LIG4, XRCC4, XRCC6/Ku70, XRCC5/Ku86 and NHEJ1/XLF. Additional component of the NHEJ complex includes PAXX. Following autophosphorylation, PRKDC dissociates from DNA, leading to formation of the short-range NHEJ complex, composed of LIG4, XRCC4, XRCC6/Ku70, XRCC5/Ku86 and NHEJ1/XLF. Interacts with PRKDC; the interaction is direct. Interacts with XRCC6/Ku70; the interaction is direct. Interacts with APTX and APLF. Forms a heterotetramer with IFFO1; the interaction involves LIG4-free XRCC4 and leads to the relocalization of IFFO1 to the sites of DNA damage. Interacts with PNKP; mainly interacts with PNKP when phosphorylated at Thr-230, but is also able to interact at much lower level with PNKP when not unphosphorylated. Interacts with POLL (DNA polymerase lambda). Interacts with XKR4; interacts with the processed form of XKR4, which is cleaved by caspase. Phosphorylated by PRKDC at the C-terminus in response to DNA damage; Ser-253 constitutes the main phosphorylation sites. Phosphorylations by PRKDC at the C-terminus of XRCC4 and NHEJ1/XLF are highly redundant and regulate ability of the XRCC4-NHEJ1/XLF subcomplex to bridge DNA. Phosphorylation by PRKDC does not prevent interaction with NHEJ1/XLF but disrupts ability to bridge DNA and promotes detachment from DNA. Phosphorylation at Ser-320 and Ser-321 by PRKDC promotes recognition by the SCF(FBXW7) complex and subsequent ubiquitination via 'Lys-63'-linked ubiquitin. Phosphorylation at Thr-230 by CK2 promotes interaction with PNKP; regulating PNKP activity and localization to DNA damage sites. Phosphorylation by CK2 promotes interaction with APTX. Post-translationally, ubiquitinated at Lys-289 by the SCF(FBXW7) complex via 'Lys-63'-linked ubiquitination, thereby promoting double-strand break repair: the SCF(FBXW7) complex specifically recognizes XRCC4 when phosphorylated at Ser-320 and Ser-321 by PRKDC, and 'Lys-63'-linked ubiquitination facilitates DNA non-homologous end joining (NHEJ) by enhancing association with XRCC5/Ku80 and XRCC6/Ku70. Monoubiquitinated. In terms of processing, undergoes proteolytic processing by caspase-3 (CASP3). This generates the protein XRCC4, C-terminus (XRCC4/C), which translocates to the cytoplasm and activates phospholipid scramblase activity of XKR4, thereby promoting phosphatidylserine exposure on apoptotic cell surface.

It is found in the nucleus. It localises to the chromosome. Its subcellular location is the cytoplasm. In terms of biological role, DNA non-homologous end joining (NHEJ) core factor, required for double-strand break repair and V(D)J recombination. Acts as a scaffold protein that regulates recruitment of other proteins to DNA double-strand breaks (DSBs). Associates with NHEJ1/XLF to form alternating helical filaments that bridge DNA and act like a bandage, holding together the broken DNA until it is repaired. The XRCC4-NHEJ1/XLF subcomplex binds to the DNA fragments of a DSB in a highly diffusive manner and robustly bridges two independent DNA molecules, holding the broken DNA fragments in close proximity to one other. The mobility of the bridges ensures that the ends remain accessible for further processing by other repair factors. Plays a key role in the NHEJ ligation step of the broken DNA during DSB repair via direct interaction with DNA ligase IV (LIG4): the LIG4-XRCC4 subcomplex reseals the DNA breaks after the gap filling is completed. XRCC4 stabilizes LIG4, regulates its subcellular localization and enhances LIG4's joining activity. Binding of the LIG4-XRCC4 subcomplex to DNA ends is dependent on the assembly of the DNA-dependent protein kinase complex DNA-PK to these DNA ends. Promotes displacement of PNKP from processed strand break termini. Functionally, acts as an activator of the phospholipid scramblase activity of XKR4. This form, which is generated upon caspase-3 (CASP3) cleavage, translocates into the cytoplasm and interacts with XKR4, thereby promoting phosphatidylserine scramblase activity of XKR4 and leading to phosphatidylserine exposure on apoptotic cell surface. In Cricetulus griseus (Chinese hamster), this protein is DNA repair protein XRCC4.